The primary structure comprises 152 residues: Superoxide dismutase [Cu-Zn] (152 aa).

Cu cation is bound by residues His-45, His-47, and His-62. Cys-56 and Cys-145 are joined by a disulfide. Residues His-62, His-70, His-79, and Asp-82 each contribute to the Zn(2+) site. His-119 is a Cu cation binding site.

Belongs to the Cu-Zn superoxide dismutase family. As to quaternary structure, homodimer. It depends on Cu cation as a cofactor. Zn(2+) serves as cofactor.

The protein localises to the cytoplasm. The enzyme catalyses 2 superoxide + 2 H(+) = H2O2 + O2. In terms of biological role, destroys radicals which are normally produced within the cells and which are toxic to biological systems. This is Superoxide dismutase [Cu-Zn] (SODCC) from Panax ginseng (Korean ginseng).